Reading from the N-terminus, the 369-residue chain is DNA replication and repair protein RecF (369 aa).

30–37 (GPNGSGKT) contributes to the ATP binding site.

Belongs to the RecF family.

It is found in the cytoplasm. Functionally, the RecF protein is involved in DNA metabolism; it is required for DNA replication and normal SOS inducibility. RecF binds preferentially to single-stranded, linear DNA. It also seems to bind ATP. This Chlorobium luteolum (strain DSM 273 / BCRC 81028 / 2530) (Pelodictyon luteolum) protein is DNA replication and repair protein RecF.